The sequence spans 232 residues: Secreted LysM effector Mg3LysM (232 aa).

An N-terminal signal peptide occupies residues 1–16; sequence MQNIFLAATLLGAAFA. Positions 47 to 91 constitute a LysM 1 domain; the sequence is TNYTVKAGDTLGAIAKQYNSGVCDIAKVNGIDNPDYIKPDQVLSI. 6 N-linked (GlcNAc...) asparagine glycosylation sites follow: asparagine 48, asparagine 100, asparagine 138, asparagine 195, asparagine 209, and asparagine 227. LysM domains follow at residues 120–165 and 177–221; these read STYT…VINT and GTYV…IIIL.

This sequence belongs to the secreted LysM effector family.

Functionally, secreted effector that enables the plant pathogenic fungus to manipulate host defenses for successful infection. Binds chitin fragments and blocks the activation of chitin-induced plant defense responses. Protects fungal hyphae against hydrolytic plant enzymes. This Zymoseptoria tritici (strain CBS 115943 / IPO323) (Speckled leaf blotch fungus) protein is Secreted LysM effector Mg3LysM.